Here is a 310-residue protein sequence, read N- to C-terminus: Isoflavone reductase homolog A622-like (310 aa).

Residues 13-19 (GGTGYIG), R38, and K47 each bind NADP(+). K135 serves as the catalytic Proton acceptor. Residue R139 participates in NADP(+) binding.

This sequence belongs to the NmrA-type oxidoreductase family. Isoflavone reductase subfamily. Monomer. In terms of tissue distribution, expressed in roots.

It is found in the cytoplasm. The protein operates within alkaloid biosynthesis; nicotine biosynthesis. Involved in the biosynthesis of pyridine alkaloid natural products, leading mainly to the production of anabasine, anatabine, nicotine and nornicotine, effective deterrents against herbivores with antiparasitic and pesticide properties (neurotoxins); nornicotine serves as the precursor in the synthesis of the carcinogen compound N'-nitrosonornicotine (NNN). Reductase that may be involved in a late step of tobacco alkaloid biosynthesis. Maybe involved in either the formation of a nicotinic acid-derived precursor or the final condensation reaction of tobacco alkaloids. This Nicotiana tabacum (Common tobacco) protein is Isoflavone reductase homolog A622-like.